The sequence spans 167 residues: NADH-quinone oxidoreductase subunit B (167 aa).

Residues Cys-40, Cys-41, Cys-105, and Cys-134 each contribute to the [4Fe-4S] cluster site.

The protein belongs to the complex I 20 kDa subunit family. As to quaternary structure, NDH-1 is composed of 14 different subunits. Subunits NuoB, C, D, E, F, and G constitute the peripheral sector of the complex. [4Fe-4S] cluster serves as cofactor.

Its subcellular location is the cell inner membrane. It catalyses the reaction a quinone + NADH + 5 H(+)(in) = a quinol + NAD(+) + 4 H(+)(out). In terms of biological role, NDH-1 shuttles electrons from NADH, via FMN and iron-sulfur (Fe-S) centers, to quinones in the respiratory chain. The immediate electron acceptor for the enzyme in this species is believed to be ubiquinone. Couples the redox reaction to proton translocation (for every two electrons transferred, four hydrogen ions are translocated across the cytoplasmic membrane), and thus conserves the redox energy in a proton gradient. The sequence is that of NADH-quinone oxidoreductase subunit B from Campylobacter jejuni (strain RM1221).